A 370-amino-acid chain; its full sequence is Histidinol-phosphate aminotransferase 1 (370 aa).

Lys222 is subject to N6-(pyridoxal phosphate)lysine.

It belongs to the class-II pyridoxal-phosphate-dependent aminotransferase family. Histidinol-phosphate aminotransferase subfamily. As to quaternary structure, homodimer. It depends on pyridoxal 5'-phosphate as a cofactor.

It catalyses the reaction L-histidinol phosphate + 2-oxoglutarate = 3-(imidazol-4-yl)-2-oxopropyl phosphate + L-glutamate. Its pathway is amino-acid biosynthesis; L-histidine biosynthesis; L-histidine from 5-phospho-alpha-D-ribose 1-diphosphate: step 7/9. The chain is Histidinol-phosphate aminotransferase 1 from Bacillus thuringiensis subsp. konkukian (strain 97-27).